A 309-amino-acid chain; its full sequence is 2-phospho-L-lactate transferase (309 aa).

7,8-didemethyl-8-hydroxy-5-deazariboflavin is bound by residues Asp48 and Lys87.

Belongs to the CofD family. Homodimer. It depends on Mg(2+) as a cofactor.

The catalysed reaction is (2S)-lactyl-2-diphospho-5'-guanosine + 7,8-didemethyl-8-hydroxy-5-deazariboflavin = oxidized coenzyme F420-0 + GMP + H(+). It functions in the pathway cofactor biosynthesis; coenzyme F420 biosynthesis. Functionally, catalyzes the transfer of the 2-phospholactate moiety from (2S)-lactyl-2-diphospho-5'-guanosine to 7,8-didemethyl-8-hydroxy-5-deazariboflavin (FO) with the formation of oxidized coenzyme F420-0 and GMP. In Methanosarcina barkeri (strain Fusaro / DSM 804), this protein is 2-phospho-L-lactate transferase.